Consider the following 179-residue polypeptide: MSEKDFVQVAKLGKTVGLKGYVKLHNLSDFSSQFKKDATFFIKNTKEMLKIKHYNASNSTVLFENYEDIEKAKELINLILFQSIEKSRQTCKLKKDEFFYFDILECEVFEEDKRLGKVIDILETGASYLFEIQSDEKWVEKKYPKIFFIPYLDKFVKNIDIEKRQIFCTQDAFLILENS.

The PRC barrel domain occupies 95–174 (KDEFFYFDIL…QIFCTQDAFL (80 aa)).

The protein belongs to the RimM family. In terms of assembly, binds ribosomal protein uS19.

The protein localises to the cytoplasm. Its function is as follows. An accessory protein needed during the final step in the assembly of 30S ribosomal subunit, possibly for assembly of the head region. Essential for efficient processing of 16S rRNA. May be needed both before and after RbfA during the maturation of 16S rRNA. It has affinity for free ribosomal 30S subunits but not for 70S ribosomes. This Campylobacter jejuni subsp. jejuni serotype O:6 (strain 81116 / NCTC 11828) protein is Ribosome maturation factor RimM.